Here is a 320-residue protein sequence, read N- to C-terminus: Aurora kinase B (320 aa).

Residues 1–10 (MQNKENREPR) are compositionally biased toward basic and acidic residues. Residues 1 to 38 (MQNKENREPRVQQTPSAGVGPLRVEMNPDTHAVSGPGR) form a disordered region. The region spanning 53 to 303 (FDIGRPLGKG…LRSVMEHPWV (251 aa)) is the Protein kinase domain. ATP-binding positions include 59-67 (LGKGKFGNV) and lysine 82. Aspartate 176 (proton acceptor) is an active-site residue.

It belongs to the protein kinase superfamily. Ser/Thr protein kinase family. Aurora subfamily. Component of the chromosomal passenger complex (CPC).

The protein resides in the nucleus. It is found in the chromosome. The protein localises to the centromere. It localises to the cytoplasm. Its subcellular location is the cytoskeleton. The protein resides in the spindle. It is found in the midbody. It carries out the reaction L-seryl-[protein] + ATP = O-phospho-L-seryl-[protein] + ADP + H(+). It catalyses the reaction L-threonyl-[protein] + ATP = O-phospho-L-threonyl-[protein] + ADP + H(+). With respect to regulation, kinase activity is stimulated by cell-cycle specific phosphorylation. In terms of biological role, serine/threonine-protein kinase component of the chromosomal passenger complex (CPC), a complex that acts as a key regulator of mitosis. The CPC complex has essential functions at the centromere in ensuring correct chromosome alignment and segregation and is required for chromatin-induced microtubule stabilization and spindle assembly. Involved in the bipolar attachment of spindle microtubules to kinetochores and is a key regulator for the onset of cytokinesis during mitosis. Required for central/midzone spindle assembly and cleavage furrow formation. Key component of the cytokinesis checkpoint, a process required to delay abscission to prevent both premature resolution of intercellular chromosome bridges and accumulation of DNA damage. Phosphorylates 'Ser-10' of histone H3 during mitosis. In Danio rerio (Zebrafish), this protein is Aurora kinase B (aurkb).